Consider the following 193-residue polypeptide: Xanthine phosphoribosyltransferase (193 aa).

Xanthine-binding residues include L20 and T27. 128–132 is a binding site for 5-phospho-alpha-D-ribose 1-diphosphate; sequence ANGQA. Xanthine is bound at residue K156.

It belongs to the purine/pyrimidine phosphoribosyltransferase family. Xpt subfamily. In terms of assembly, homodimer.

The protein resides in the cytoplasm. The enzyme catalyses XMP + diphosphate = xanthine + 5-phospho-alpha-D-ribose 1-diphosphate. It functions in the pathway purine metabolism; XMP biosynthesis via salvage pathway; XMP from xanthine: step 1/1. In terms of biological role, converts the preformed base xanthine, a product of nucleic acid breakdown, to xanthosine 5'-monophosphate (XMP), so it can be reused for RNA or DNA synthesis. The protein is Xanthine phosphoribosyltransferase of Streptococcus pneumoniae (strain CGSP14).